The sequence spans 156 residues: Small ribosomal subunit protein bS18c (156 aa).

The interval 1 to 54 (MYTSKQPFLKSKQPFRKSKQPFRKSKQPFRKFKKPFRKSKQPFRRRPRIGPGDR) is disordered. Residues 13–48 (QPFRKSKQPFRKSKQPFRKFKKPFRKSKQPFRRRPR) show a composition bias toward basic residues.

The protein belongs to the bacterial ribosomal protein bS18 family. In terms of assembly, part of the 30S ribosomal subunit.

It is found in the plastid. The protein localises to the chloroplast. This chain is Small ribosomal subunit protein bS18c, found in Lolium perenne (Perennial ryegrass).